The chain runs to 92 residues: Long neurotoxin 3FTx-Oxy1 (92 aa).

The signal sequence occupies residues 1 to 21 (MKTLLLTLVVVTIVCLDLGYT). Cystine bridges form between Cys-24-Cys-42, Cys-35-Cys-63, Cys-48-Cys-52, Cys-67-Cys-79, and Cys-80-Cys-85.

This sequence belongs to the three-finger toxin family. Long-chain subfamily. Type II alpha-neurotoxin sub-subfamily. Expressed by the venom gland.

The protein resides in the secreted. Its function is as follows. Binds with high affinity to muscular (alpha-1/CHRNA1) and neuronal (alpha-7/CHRNA7) nicotinic acetylcholine receptor (nAChR) and inhibits acetylcholine from binding to the receptor, thereby impairing neuromuscular and neuronal transmission. This chain is Long neurotoxin 3FTx-Oxy1, found in Oxyuranus microlepidotus (Inland taipan).